Consider the following 271-residue polypeptide: Aquaporin-2 (271 aa).

Over 1–11 (MWELRSIAFSR) the chain is Cytoplasmic. A helical membrane pass occupies residues 12–32 (AVLAEFLATLLFVFFGLGSAL). Topologically, residues 33 to 40 (NWPQALPS) are extracellular. Residues 41-59 (VLQIAMAFGLAIGTLVQAL) traverse the membrane as a helical segment. The Cytoplasmic segment spans residues 60–64 (GHVSG). The segment at residues 65–74 (AHINPAVTVA) is an intramembrane region (discontinuously helical). The short motif at 68 to 70 (NPA) is the NPA 1 element. Over 75 to 85 (CLVGCHVSFLR) the chain is Cytoplasmic. A helical transmembrane segment spans residues 86 to 107 (AVFYVAAQLLGAVAGAALLHEI). Over 108-127 (TPPAIRGDLAVNALNNNSTA) the chain is Extracellular. N123 is a glycosylation site (N-linked (GlcNAc...) asparagine). A helical membrane pass occupies residues 128-148 (GQAVTVELFLTLQLVLCIFAS). At 149 to 156 (TDERRGDN) the chain is on the cytoplasmic side. A helical membrane pass occupies residues 157-176 (VGTPALSIGFSVALGHLLGI). At 177–180 (HYTG) the chain is on the extracellular side. An intramembrane region (discontinuously helical) is located at residues 181–193 (CSMNPARSLAPAI). An NPA 2 motif is present at residues 184–186 (NPA). Residues 194–201 (VTGKFDDH) lie on the Extracellular side of the membrane. Residues 202–222 (WVFWIGPLVGAIVASLLYNYV) traverse the membrane as a helical segment. Residues 223 to 271 (LFPPAKSLSERLAVLKGLEPDTDWEEREVRRRQSVELHSPQSLPRGSKA) are Cytoplasmic-facing. A disordered region spans residues 251–271 (VRRRQSVELHSPQSLPRGSKA). At S256 the chain carries Phosphoserine. Over residues 261-271 (SPQSLPRGSKA) the composition is skewed to polar residues.

The protein belongs to the MIP/aquaporin (TC 1.A.8) family. In terms of assembly, homotetramer. Ser-256 phosphorylation is necessary and sufficient for expression at the apical membrane. Endocytosis is not phosphorylation-dependent. Post-translationally, N-glycosylated.

It is found in the apical cell membrane. The protein resides in the basolateral cell membrane. Its subcellular location is the cell membrane. The protein localises to the cytoplasmic vesicle membrane. It localises to the golgi apparatus. It is found in the trans-Golgi network membrane. The enzyme catalyses H2O(in) = H2O(out). The catalysed reaction is glycerol(in) = glycerol(out). Its function is as follows. Forms a water-specific channel that provides the plasma membranes of renal collecting duct with high permeability to water, thereby permitting water to move in the direction of an osmotic gradient. Could also be permeable to glycerol. The sequence is that of Aquaporin-2 from Bos taurus (Bovine).